Reading from the N-terminus, the 196-residue chain is Thymidine kinase (196 aa).

ATP contacts are provided by residues 9-16 and 88-91; these read SAMNAGKS and DEAQ. E89 serves as the catalytic Proton acceptor. The Zn(2+) site is built by C146, C148, C183, and H186.

It belongs to the thymidine kinase family. In terms of assembly, homotetramer.

The protein resides in the cytoplasm. It carries out the reaction thymidine + ATP = dTMP + ADP + H(+). The protein is Thymidine kinase of Coxiella burnetii (strain RSA 493 / Nine Mile phase I).